The following is a 486-amino-acid chain: NADH-quinone oxidoreductase subunit N 1 (486 aa).

Helical transmembrane passes span 15-35 (FLPEIILTVMGTLLMVLDPVI), 46-66 (ISLIALVMALGASIYAYGIAG), 72-92 (MLMVDGFATFFRVVVITVGIL), 111-128 (YHALLLFSIAGQCLMAAS), 131-151 (LIMVFIGLEISSIASYVLAGY), 166-186 (FLLGSFATGFFLYGVAWIYGL), 208-228 (FVGIAAALMFVGLAFKVSAAP), 241-261 (PTPVSAFLSAGPKAAAFAIFL), 276-296 (QPLVWTAALASMCIGNFAAIL), 303-323 (MLAYSSIAHAGYVLVALTAHS), 331-351 (MFYLAGYAFMNVGAFAAVSVL), 375-395 (AAMFTIFLLSLLGVPLTGGFF), 410-432 (IWLTVLGLLNSAVGAYYYLRILV), and 455-475 (FALILPALGTLALGIFPGWVL).

This sequence belongs to the complex I subunit 2 family. NDH-1 is composed of 14 different subunits. Subunits NuoA, H, J, K, L, M, N constitute the membrane sector of the complex.

Its subcellular location is the cell inner membrane. The catalysed reaction is a quinone + NADH + 5 H(+)(in) = a quinol + NAD(+) + 4 H(+)(out). NDH-1 shuttles electrons from NADH, via FMN and iron-sulfur (Fe-S) centers, to quinones in the respiratory chain. The immediate electron acceptor for the enzyme in this species is believed to be ubiquinone. Couples the redox reaction to proton translocation (for every two electrons transferred, four hydrogen ions are translocated across the cytoplasmic membrane), and thus conserves the redox energy in a proton gradient. The sequence is that of NADH-quinone oxidoreductase subunit N 1 from Solibacter usitatus (strain Ellin6076).